We begin with the raw amino-acid sequence, 245 residues long: Oncostatin-M (245 aa).

The signal sequence occupies residues 1–26 (MGAQRMQRTLLSLVLRLLLLCTVATG). 2 disulfides stabilise this stretch: cysteine 28-cysteine 135 and cysteine 71-cysteine 177. Residue asparagine 97 is glycosylated (N-linked (GlcNAc...) asparagine). Disordered stretches follow at residues 143–171 (SSDP…STFQ) and 197–245 (WGER…APAR). Residues 153-166 (QPGPGPTPLPPTPP) are compositionally biased toward pro residues. The segment covering 203–218 (RSRRHSPCRALKRGAR) has biased composition (basic residues). A propeptide spanning residues 207 to 245 (HSPCRALKRGARRTQPFPEIRRLAPRGQPPGSLWGAPAR) is cleaved from the precursor.

It belongs to the LIF/OSM family. Propeptide processing is not important for receptor binding activity but may be important growth-inhibitory activity.

The protein localises to the secreted. In terms of biological role, growth regulator. Inhibits the proliferation of a number of tumor cell lines. It regulates cytokine production, including IL-6, G-CSF and GM-CSF from endothelial cells. Uses both type I OSM receptor (heterodimers composed of LIFR and IL6ST) and type II OSM receptor (heterodimers composed of OSMR and IL6ST). Involved in the maturation of fetal hepatocytes, thereby promoting liver development and regeneration. This chain is Oncostatin-M (OSM), found in Bos taurus (Bovine).